The following is an 802-amino-acid chain: Acetyl-CoA decarbonylase/synthase complex subunit alpha 1 (802 aa).

Cys68, Cys71, Cys76, and Cys86 together coordinate [4Fe-4S] cluster. His109 contributes to the CO binding site. Residues His243, Cys271, and Cys310 each coordinate [Ni-4Fe-4S] cluster. 4Fe-4S ferredoxin-type domains are found at residues 395–424 (DEAL…VDQG) and 435–464 (SKLA…INVI). Cys405, Cys408, Cys411, Cys415, Cys444, Cys447, Cys450, and Cys454 together coordinate [4Fe-4S] cluster. [Ni-4Fe-4S] cluster contacts are provided by Cys512, Cys541, and Cys576.

The protein belongs to the Ni-containing carbon monoxide dehydrogenase family. Heterotetramer of two alpha and two epsilon subunits. The ACDS complex is made up of alpha, epsilon, beta, gamma and delta subunits with a probable stoichiometry of (alpha(2)epsilon(2))(4)-beta(8)-(gamma(1)delta(1))(8). [4Fe-4S] cluster serves as cofactor. Requires [Ni-4Fe-4S] cluster as cofactor.

The catalysed reaction is CO + 2 oxidized [2Fe-2S]-[ferredoxin] + H2O = 2 reduced [2Fe-2S]-[ferredoxin] + CO2 + 2 H(+). Functionally, part of the ACDS complex that catalyzes the reversible cleavage of acetyl-CoA, allowing autotrophic growth from CO(2). The alpha-epsilon subcomponent functions as a carbon monoxide dehydrogenase. The polypeptide is Acetyl-CoA decarbonylase/synthase complex subunit alpha 1 (Archaeoglobus fulgidus (strain ATCC 49558 / DSM 4304 / JCM 9628 / NBRC 100126 / VC-16)).